Reading from the N-terminus, the 603-residue chain is DNA mismatch repair protein MutL (603 aa).

This sequence belongs to the DNA mismatch repair MutL/HexB family.

Its function is as follows. This protein is involved in the repair of mismatches in DNA. It is required for dam-dependent methyl-directed DNA mismatch repair. May act as a 'molecular matchmaker', a protein that promotes the formation of a stable complex between two or more DNA-binding proteins in an ATP-dependent manner without itself being part of a final effector complex. This Nitrobacter winogradskyi (strain ATCC 25391 / DSM 10237 / CIP 104748 / NCIMB 11846 / Nb-255) protein is DNA mismatch repair protein MutL.